The sequence spans 227 residues: Type II restriction enzyme ScaI (227 aa).

Residues 12–35 (EARVGTRTGGPAMRPKTSDSPYFG) are disordered.

The enzyme catalyses Endonucleolytic cleavage of DNA to give specific double-stranded fragments with terminal 5'-phosphates.. Its function is as follows. A P subtype restriction enzyme that recognizes the double-stranded sequence 5'-AGTACT-3' and cleaves after T-3. The sequence is that of Type II restriction enzyme ScaI from Streptomyces caespitosus.